Here is a 391-residue protein sequence, read N- to C-terminus: RNA-binding motif protein, X chromosome (391 aa).

Met1 is subject to N-acetylmethionine; in Heterogeneous nuclear ribonucleoprotein G; alternate. Position 2 is an N-acetylvaline; in Heterogeneous nuclear ribonucleoprotein G, N-terminally processed (Val2). The RRM domain maps to 8–86; it reads GKLFIGGLNT…KAIKVEQATK (79 aa). Lys22 is covalently cross-linked (Glycyl lysine isopeptide (Lys-Gly) (interchain with G-Cter in SUMO2)). Lys30 is subject to N6-acetyllysine. Residues 61 to 80 show a composition bias toward basic and acidic residues; that stretch reads DAKDAARDMNGKSLDGKAIK. Residues 61 to 391 form a disordered region; sequence DAKDAARDMN…SDRGGGRSRY (331 aa). Glycyl lysine isopeptide (Lys-Gly) (interchain with G-Cter in SUMO2) cross-links involve residues Lys80 and Lys86. A phosphoserine mark is found at Ser88 and Ser91. Positions 109 to 120 are enriched in gly residues; sequence LRGGRGGSGGTR. An omega-N-methylarginine mark is found at Arg125, Arg144, and Arg164. A compositionally biased stretch (pro residues) spans 151-164; sequence RGPPPRSGGPPPKR. The residue at position 165 (Ser165) is a Phosphoserine. Arg172 carries the post-translational modification Omega-N-methylarginine. Phosphoserine is present on Ser174. Residues 186–236 are necessary for the association to nascent RNAPII transcripts and nuclear localization; it reads GRDSYGGPPRREPLPSRRDVYLSPRDDGYSTKDSYSSRDYPSSRDTRDYAP. Basic and acidic residues-rich tracts occupy residues 194–215 and 241–274; these read PRRE…DGYS and YTYR…DYSD. Ser261, Ser328, Ser329, Ser330, and Ser332 each carry phosphoserine. A compositionally biased stretch (low complexity) spans 323 to 337; that stretch reads SRDSYSSSRSDLYSS. The interval 333-391 is necessary for RNA-binding; the sequence is DLYSSGRDRVGRQERGLPPSMERGYPPPRDSYSSSSRGAPRGGGRGGSRSDRGGGRSRY. Residues 338–347 are compositionally biased toward basic and acidic residues; that stretch reads GRDRVGRQER. Phosphoserine is present on Ser352. Over residues 362-371 the composition is skewed to low complexity; sequence DSYSSSSRGA. Over residues 380-391 the composition is skewed to basic and acidic residues; that stretch reads SRSDRGGGRSRY.

As to quaternary structure, homomultimer. Found in the supraspliceosome complex. Identified in the spliceosome C complex. Forms a complex with ILF2, ILF3, YLPM1, KHDRBS1, NCOA5 and PPP1CA. Interacts with CLK2, KHDRBS2, KHDRBS3, SAFB/SAFB1, TRA2B and YTHDC1. Interacts with ERAP1; the interaction is RNA-independent. Interacts with PPIA/CYPA. In terms of processing, O-glycosylated. Arg-185 is dimethylated, probably to asymmetric dimethylarginine.

Its subcellular location is the nucleus. In terms of biological role, RNA-binding protein that plays several role in the regulation of pre- and post-transcriptional processes. Implicated in tissue-specific regulation of gene transcription and alternative splicing of several pre-mRNAs. Binds to and stimulates transcription from the tumor suppressor TXNIP gene promoter; may thus be involved in tumor suppression. When associated with SAFB, binds to and stimulates transcription from the SREBF1 promoter. Associates with nascent mRNAs transcribed by RNA polymerase II. Component of the supraspliceosome complex that regulates pre-mRNA alternative splice site selection. Can either activate or suppress exon inclusion; acts additively with TRA2B to promote exon 7 inclusion of the survival motor neuron SMN2. Represses the splicing of MAPT/Tau exon 10. Binds preferentially to single-stranded 5'-CC[A/C]-rich RNA sequence motifs localized in a single-stranded conformation; probably binds RNA as a homodimer. Binds non-specifically to pre-mRNAs. Also plays a role in the cytoplasmic TNFR1 trafficking pathways; promotes both the IL-1-beta-mediated inducible proteolytic cleavage of TNFR1 ectodomains and the release of TNFR1 exosome-like vesicles to the extracellular compartment. In Pan troglodytes (Chimpanzee), this protein is RNA-binding motif protein, X chromosome (RBMX).